Here is a 337-residue protein sequence, read N- to C-terminus: Ribosomal RNA small subunit methyltransferase H (337 aa).

S-adenosyl-L-methionine is bound by residues 45-47 (GGH), aspartate 64, phenylalanine 91, aspartate 120, and glutamine 127.

Belongs to the methyltransferase superfamily. RsmH family.

The protein resides in the cytoplasm. It catalyses the reaction cytidine(1402) in 16S rRNA + S-adenosyl-L-methionine = N(4)-methylcytidine(1402) in 16S rRNA + S-adenosyl-L-homocysteine + H(+). Its function is as follows. Specifically methylates the N4 position of cytidine in position 1402 (C1402) of 16S rRNA. The chain is Ribosomal RNA small subunit methyltransferase H from Corynebacterium glutamicum (strain R).